The following is a 602-amino-acid chain: ATP-dependent DNA helicase XPD (602 aa).

The region spanning 1-247 is the Helicase ATP-binding domain; it reads MQKSYGVALE…DLIEMIRSAL (247 aa). 11-18 provides a ligand contact to ATP; that stretch reads SPTGSGKT. [4Fe-4S] cluster is bound by residues C74, C95, C110, and C146. The DEAH box motif lies at 193-196; sequence DEAH. Residues 421–602 enclose the Helicase C-terminal domain; it reads VIEDIILKVK…SAQAREKYGA (182 aa). The ssDNA site is built by W531 and R566.

The protein belongs to the helicase family. RAD3/XPD subfamily. As to quaternary structure, monomer. [4Fe-4S] cluster is required as a cofactor.

The catalysed reaction is Couples ATP hydrolysis with the unwinding of duplex DNA at the replication fork by translocating in the 5'-3' direction. This creates two antiparallel DNA single strands (ssDNA). The leading ssDNA polymer is the template for DNA polymerase III holoenzyme which synthesizes a continuous strand.. The enzyme catalyses ATP + H2O = ADP + phosphate + H(+). Its function is as follows. ATP-dependent 5'-3' DNA helicase. Thought to be involved in nucleotide excision repair (NER) of DNA. In Thermoplasma acidophilum (strain ATCC 25905 / DSM 1728 / JCM 9062 / NBRC 15155 / AMRC-C165), this protein is ATP-dependent DNA helicase XPD.